Consider the following 62-residue polypeptide: Short neurotoxin A (62 aa).

Positions 1–16 (RRCFNHPSSQPQTNKS) are enriched in polar residues. The segment at 1–21 (RRCFNHPSSQPQTNKSCPPGE) is disordered. 4 disulfides stabilise this stretch: cysteine 3/cysteine 24, cysteine 17/cysteine 41, cysteine 43/cysteine 54, and cysteine 55/cysteine 60.

Belongs to the three-finger toxin family. Short-chain subfamily. Type I alpha-neurotoxin sub-subfamily. As to expression, expressed by the venom gland.

The protein localises to the secreted. In terms of biological role, binds to muscle nicotinic acetylcholine receptor (nAChR) and inhibit acetylcholine from binding to the receptor, thereby impairing neuromuscular transmission. In Laticauda crockeri (Crocker's sea snake), this protein is Short neurotoxin A.